A 209-amino-acid polypeptide reads, in one-letter code: Probable nicotinate-nucleotide adenylyltransferase (209 aa).

This sequence belongs to the NadD family.

The catalysed reaction is nicotinate beta-D-ribonucleotide + ATP + H(+) = deamido-NAD(+) + diphosphate. It functions in the pathway cofactor biosynthesis; NAD(+) biosynthesis; deamido-NAD(+) from nicotinate D-ribonucleotide: step 1/1. Its function is as follows. Catalyzes the reversible adenylation of nicotinate mononucleotide (NaMN) to nicotinic acid adenine dinucleotide (NaAD). The polypeptide is Probable nicotinate-nucleotide adenylyltransferase (Streptococcus pneumoniae serotype 4 (strain ATCC BAA-334 / TIGR4)).